The following is a 328-amino-acid chain: Dof zinc finger protein PBF (328 aa).

The interval 33–56 is disordered; that stretch reads RDPKQTRAMPQIGGSGERKPRPQL. Residues 60–114 form a Dof-type zinc finger; it reads LKCPRCDSNNTKFCYYNNYSMSQPRYFCKACRRYWTHGGTLRNVPIGGGCRKNKH. Zn(2+) contacts are provided by cysteine 62, cysteine 65, cysteine 87, and cysteine 90. Disordered stretches follow at residues 124-144 and 306-328; these read TSSSSSATYAPLSPSTNASSS and WNKHNNNNNNNNNNNNNNNNKGQ.

In terms of assembly, interacts with the bZIP transcription factor Opaque-2/O2. In terms of tissue distribution, seed endosperm.

The protein resides in the nucleus. Its function is as follows. Transcription factor that binds specifically to a 5'-AA[AG]G-3' consensus core sequence. May enhance the DNA binding of the bZIP transcription factor Opaque-2 to O2 binding site elements. The protein is Dof zinc finger protein PBF (PBF) of Zea mays (Maize).